Here is a 274-residue protein sequence, read N- to C-terminus: 3-methyl-2-oxobutanoate hydroxymethyltransferase (274 aa).

Positions 49 and 88 each coordinate Mg(2+). 3-methyl-2-oxobutanoate-binding positions include 49–50 (DS), aspartate 88, and lysine 118. Glutamate 120 lines the Mg(2+) pocket. Glutamate 187 acts as the Proton acceptor in catalysis.

The protein belongs to the PanB family. As to quaternary structure, homodecamer; pentamer of dimers. Mg(2+) is required as a cofactor.

The protein resides in the cytoplasm. The enzyme catalyses 3-methyl-2-oxobutanoate + (6R)-5,10-methylene-5,6,7,8-tetrahydrofolate + H2O = 2-dehydropantoate + (6S)-5,6,7,8-tetrahydrofolate. It participates in cofactor biosynthesis; (R)-pantothenate biosynthesis; (R)-pantoate from 3-methyl-2-oxobutanoate: step 1/2. Catalyzes the reversible reaction in which hydroxymethyl group from 5,10-methylenetetrahydrofolate is transferred onto alpha-ketoisovalerate to form ketopantoate. The protein is 3-methyl-2-oxobutanoate hydroxymethyltransferase of Rhodopseudomonas palustris (strain BisB5).